We begin with the raw amino-acid sequence, 152 residues long: Deoxyuridine 5'-triphosphate nucleotidohydrolase (152 aa).

Substrate contacts are provided by residues 71–73 (RSG), Asn-84, 88–90 (LID), and Met-98.

It belongs to the dUTPase family. Mg(2+) is required as a cofactor.

The catalysed reaction is dUTP + H2O = dUMP + diphosphate + H(+). It functions in the pathway pyrimidine metabolism; dUMP biosynthesis; dUMP from dCTP (dUTP route): step 2/2. In terms of biological role, this enzyme is involved in nucleotide metabolism: it produces dUMP, the immediate precursor of thymidine nucleotides and it decreases the intracellular concentration of dUTP so that uracil cannot be incorporated into DNA. In Shewanella loihica (strain ATCC BAA-1088 / PV-4), this protein is Deoxyuridine 5'-triphosphate nucleotidohydrolase.